Reading from the N-terminus, the 395-residue chain is Putative 8-amino-7-oxononanoate synthase (395 aa).

Arginine 23 is a binding site for substrate. Glycine 110–tyrosine 111 contributes to the pyridoxal 5'-phosphate binding site. Residue histidine 135 coordinates substrate. Residues serine 182, aspartate 207–histidine 210, and threonine 239–lysine 242 contribute to the pyridoxal 5'-phosphate site. Position 242 is an N6-(pyridoxal phosphate)lysine (lysine 242). Threonine 356 provides a ligand contact to substrate.

Belongs to the class-II pyridoxal-phosphate-dependent aminotransferase family. BioF subfamily. Homodimer. Pyridoxal 5'-phosphate is required as a cofactor.

It catalyses the reaction 6-carboxyhexanoyl-[ACP] + L-alanine + H(+) = (8S)-8-amino-7-oxononanoate + holo-[ACP] + CO2. It participates in cofactor biosynthesis; biotin biosynthesis. Functionally, catalyzes the decarboxylative condensation of pimeloyl-[acyl-carrier protein] and L-alanine to produce 8-amino-7-oxononanoate (AON), [acyl-carrier protein], and carbon dioxide. The polypeptide is Putative 8-amino-7-oxononanoate synthase (bioF) (Bacillus cereus (strain ZK / E33L)).